A 332-amino-acid chain; its full sequence is Cilia- and flagella-associated protein 119 (332 aa).

Residues 1 to 10 (MITPRSSQSL) are compositionally biased toward polar residues. Disordered regions lie at residues 1–70 (MITP…ANLF), 246–271 (EDEE…EAEQ), and 308–332 (RLSN…SKAK). A compositionally biased stretch (basic and acidic residues) spans 14 to 30 (VQTELEHSPKLQEEPDR). Over residues 49 to 58 (ESPAEATSSP) the composition is skewed to polar residues. The stretch at 287-308 (LNKELRQLQQLVEERLKESEER) forms a coiled coil.

In terms of tissue distribution, specifically expressed in testis (at protein level).

The protein resides in the cell projection. It localises to the cilium. Its subcellular location is the flagellum. The protein localises to the cytoplasmic vesicle. It is found in the secretory vesicle. The protein resides in the acrosome. It localises to the cytoplasm. This Rattus norvegicus (Rat) protein is Cilia- and flagella-associated protein 119.